The chain runs to 195 residues: MRIGLLGGSFNPAHAGHLMLARRALRALRLDQVWLMVSPGNPLKPSKGMAPFRVRLASAERIADGRRIVATDIESRLGQRFTVKTVGLLKQRFPHVRFVWLMGADGLAQLSHWKRWRRLAAMVPIAVLPRPGSVSPALRGAAASVLRHQRRPSRESPVLAERKGNAWTFLSAPQNDISATALRESGQFRPDSDQE.

This sequence belongs to the NadD family.

It carries out the reaction nicotinate beta-D-ribonucleotide + ATP + H(+) = deamido-NAD(+) + diphosphate. It functions in the pathway cofactor biosynthesis; NAD(+) biosynthesis; deamido-NAD(+) from nicotinate D-ribonucleotide: step 1/1. Functionally, catalyzes the reversible adenylation of nicotinate mononucleotide (NaMN) to nicotinic acid adenine dinucleotide (NaAD). The sequence is that of Probable nicotinate-nucleotide adenylyltransferase from Gluconobacter oxydans (strain 621H) (Gluconobacter suboxydans).